A 253-amino-acid polypeptide reads, in one-letter code: N-acetylmuramoyl-L-alanine amidase CwlM (253 aa).

Positions 4–172 (IFIDPGHGGS…IARGHANGLA (169 aa)) constitute a MurNAc-LAA domain. The SPOR domain occupies 179-253 (KNAAALYKVQ…AEFDTFIYQE (75 aa)). Repeat copies occupy residues 184-219 (LYKV…YRDS) and 220-253 (LYKV…IYQE). Residues 184–253 (LYKVQIAAFR…AEFDTFIYQE (70 aa)) form a 2 X 35 AA approximate tandem repeats region.

The protein belongs to the N-acetylmuramoyl-L-alanine amidase 3 family.

Its subcellular location is the secreted. It carries out the reaction Hydrolyzes the link between N-acetylmuramoyl residues and L-amino acid residues in certain cell-wall glycopeptides.. In terms of biological role, hydrolyzes the cell wall of M.luteus more efficiently than that of B.licheniformis and B.subtilis. The C-terminal region, including the repeats, determines substrate specificity. The protein is N-acetylmuramoyl-L-alanine amidase CwlM (cwlM) of Bacillus licheniformis.